The sequence spans 333 residues: C4-dicarboxylate-binding periplasmic protein DctP (333 aa).

An N-terminal signal peptide occupies residues Met1–Ala26.

This sequence belongs to the bacterial solute-binding protein 7 family. In terms of assembly, the complex comprises the extracytoplasmic solute receptor protein DctP, and the two transmembrane proteins DctQ and DctM.

It localises to the periplasm. Part of the tripartite ATP-independent periplasmic (TRAP) transport system DctPQM involved in C4-dicarboxylates uptake. Binds C4-dicarboxylates such as fumarate, succinate, L-malate and D-malate. In Rhodobacter capsulatus (Rhodopseudomonas capsulata), this protein is C4-dicarboxylate-binding periplasmic protein DctP.